A 206-amino-acid chain; its full sequence is Small ribosomal subunit protein uS4 (206 aa).

The 62-residue stretch at Arg-96–Asp-157 folds into the S4 RNA-binding domain.

It belongs to the universal ribosomal protein uS4 family. As to quaternary structure, part of the 30S ribosomal subunit. Contacts protein S5. The interaction surface between S4 and S5 is involved in control of translational fidelity.

One of the primary rRNA binding proteins, it binds directly to 16S rRNA where it nucleates assembly of the body of the 30S subunit. Functionally, with S5 and S12 plays an important role in translational accuracy. The chain is Small ribosomal subunit protein uS4 from Thioalkalivibrio sulfidiphilus (strain HL-EbGR7).